The sequence spans 199 residues: ATP synthase subunit b (199 aa).

Residues 5 to 25 traverse the membrane as a helical segment; that stretch reads SFVTTLSVCVMILGLAALGFA.

The protein belongs to the ATPase B chain family. In terms of assembly, F-type ATPases have 2 components, F(1) - the catalytic core - and F(0) - the membrane proton channel. F(1) has five subunits: alpha(3), beta(3), gamma(1), delta(1), epsilon(1). F(0) has three main subunits: a(1), b(2) and c(10-14). The alpha and beta chains form an alternating ring which encloses part of the gamma chain. F(1) is attached to F(0) by a central stalk formed by the gamma and epsilon chains, while a peripheral stalk is formed by the delta and b chains.

It is found in the cell inner membrane. Functionally, f(1)F(0) ATP synthase produces ATP from ADP in the presence of a proton or sodium gradient. F-type ATPases consist of two structural domains, F(1) containing the extramembraneous catalytic core and F(0) containing the membrane proton channel, linked together by a central stalk and a peripheral stalk. During catalysis, ATP synthesis in the catalytic domain of F(1) is coupled via a rotary mechanism of the central stalk subunits to proton translocation. In terms of biological role, component of the F(0) channel, it forms part of the peripheral stalk, linking F(1) to F(0). This chain is ATP synthase subunit b, found in Citrifermentans bemidjiense (strain ATCC BAA-1014 / DSM 16622 / JCM 12645 / Bem) (Geobacter bemidjiensis).